A 307-amino-acid chain; its full sequence is Trehalose transport system permease protein SugA (307 aa).

6 helical membrane-spanning segments follow: residues 25–45, 89–109, 123–143, 168–188, 217–237, and 272–292; these read LAFMLVAPAAMLMVAVTAYPI, LAITAVSVTIEFVLGLALALV, AVLIPYGIVTVVASYSWYYAW, LGIVVIAEVWKTTPFMSLLLL, ILPMIKPAIVVALLFRTLDAF, and LGSAISVLIFGCVAVIAFIFI. Residues 85-291 form the ABC transmembrane type-1 domain; sequence LAVTLAITAV…GCVAVIAFIF (207 aa).

The protein belongs to the binding-protein-dependent transport system permease family. As to quaternary structure, the complex is composed of two ATP-binding proteins (SugC), two transmembrane proteins (Suga and SugB) and a solute-binding protein (LpqY).

It is found in the cell inner membrane. Functionally, part of the ABC transporter complex LpqY-SugA-SugB-SugC, which is highly specific for uptake of trehalose. Involved in the recycling of extracellular trehalose released from trehalose-containing molecules synthesized by M.tuberculosis. Trehalose uptake is essential for virulence. Probably responsible for the translocation of the substrate across the membrane. This chain is Trehalose transport system permease protein SugA (sugA), found in Mycobacterium tuberculosis (strain CDC 1551 / Oshkosh).